Reading from the N-terminus, the 398-residue chain is Dual specificity protein phosphatase 4 (398 aa).

Valine 2 carries the post-translational modification N-acetylvaline. Positions 45–163 constitute a Rhodanese domain; sequence SGGKCLLLDC…FSSEYPEFCS (119 aa). One can recognise a Tyrosine-protein phosphatase domain in the interval 199–340; it reads GPVEILPFLY…LLQFESQVLT (142 aa). Catalysis depends on cysteine 284, which acts as the Phosphocysteine intermediate. Phosphoserine; by MAPK is present on residues serine 390 and serine 395.

The protein belongs to the protein-tyrosine phosphatase family. Non-receptor class dual specificity subfamily. Hollow spherical complex composed of 24 subunits with pseudooctahedral symmetry, has a tetramer as the basic unit. Post-translationally, phosphorylation in the C-terminus by ERK1/2 inhibits proteasomal degradation and stabilizes the protein.

The protein localises to the nucleus. The enzyme catalyses O-phospho-L-tyrosyl-[protein] + H2O = L-tyrosyl-[protein] + phosphate. It carries out the reaction O-phospho-L-seryl-[protein] + H2O = L-seryl-[protein] + phosphate. It catalyses the reaction O-phospho-L-threonyl-[protein] + H2O = L-threonyl-[protein] + phosphate. Its function is as follows. Regulates mitogenic signal transduction by dephosphorylating both Thr and Tyr residues on MAP kinases ERK1 and ERK2. The protein is Dual specificity protein phosphatase 4 (Dusp4) of Mus musculus (Mouse).